Reading from the N-terminus, the 181-residue chain is Crossover junction endodeoxyribonuclease RuvC (181 aa).

Catalysis depends on residues Asp7, Glu67, and Asp139. Mg(2+) is bound by residues Asp7, Glu67, and Asp139.

It belongs to the RuvC family. Homodimer which binds Holliday junction (HJ) DNA. The HJ becomes 2-fold symmetrical on binding to RuvC with unstacked arms; it has a different conformation from HJ DNA in complex with RuvA. In the full resolvosome a probable DNA-RuvA(4)-RuvB(12)-RuvC(2) complex forms which resolves the HJ. Mg(2+) is required as a cofactor.

It localises to the cytoplasm. It catalyses the reaction Endonucleolytic cleavage at a junction such as a reciprocal single-stranded crossover between two homologous DNA duplexes (Holliday junction).. In terms of biological role, the RuvA-RuvB-RuvC complex processes Holliday junction (HJ) DNA during genetic recombination and DNA repair. Endonuclease that resolves HJ intermediates. Cleaves cruciform DNA by making single-stranded nicks across the HJ at symmetrical positions within the homologous arms, yielding a 5'-phosphate and a 3'-hydroxyl group; requires a central core of homology in the junction. The consensus cleavage sequence is 5'-(A/T)TT(C/G)-3'. Cleavage occurs on the 3'-side of the TT dinucleotide at the point of strand exchange. HJ branch migration catalyzed by RuvA-RuvB allows RuvC to scan DNA until it finds its consensus sequence, where it cleaves and resolves the cruciform DNA. This Cupriavidus metallidurans (strain ATCC 43123 / DSM 2839 / NBRC 102507 / CH34) (Ralstonia metallidurans) protein is Crossover junction endodeoxyribonuclease RuvC.